The primary structure comprises 410 residues: Cysteine desulfurase (410 aa).

An N6-(pyridoxal phosphate)lysine modification is found at Lys227. Residue Cys365 is the Cysteine persulfide intermediate of the active site.

Belongs to the class-V pyridoxal-phosphate-dependent aminotransferase family. Csd subfamily. As to quaternary structure, homodimer. Interacts with SufE and the SufBCD complex composed of SufB, SufC and SufD. The interaction with SufE is required to mediate the direct transfer of the sulfur atom from the S-sulfanylcysteine. Requires pyridoxal 5'-phosphate as cofactor.

It localises to the cytoplasm. The enzyme catalyses (sulfur carrier)-H + L-cysteine = (sulfur carrier)-SH + L-alanine. The catalysed reaction is L-selenocysteine + AH2 = hydrogenselenide + L-alanine + A + H(+). Its pathway is cofactor biosynthesis; iron-sulfur cluster biosynthesis. In terms of biological role, cysteine desulfurases mobilize the sulfur from L-cysteine to yield L-alanine, an essential step in sulfur metabolism for biosynthesis of a variety of sulfur-containing biomolecules. Component of the suf operon, which is activated and required under specific conditions such as oxidative stress and iron limitation. Acts as a potent selenocysteine lyase in vitro, that mobilizes selenium from L-selenocysteine. Selenocysteine lyase activity is however unsure in vivo. The polypeptide is Cysteine desulfurase (Wigglesworthia glossinidia brevipalpis).